The chain runs to 551 residues: TSKISTTYEEEGRQSKIQPRAFVITRSGPTSRSSSYSARQSYGSRSSITPGVYQQLSSSGITDFRGTREKEKREMQNLNERLAGYIEKVHFLDAQVKKLEAENXXXXXXXXXXXXXXXXXXXXXXXXXXXXXXXXXXXXXXXXXXXXXXXXXXXXXXXXXXXXXXXXXXXXXXXXXXXXXXXXXXXXXXXXXXXXXXXXXXXXXXXXXXXXXXXXXXXXXXXXXXXXXXXXXXXXXXXXXXXXXXXXXXXXXXXXXXXXXXXXXXXMDYAEFWKSELSKCVRDIQSAYDEKIDIIXXXXXXXXXXXXXXXXXXXXXXXMQLQHVQEEVKKLRTQAGEKNAAYAEXXXXXXXXXXXXXXXXXXXXXXXXXXXXXXXXXXXXXXXXXXXXXXXXXXXXXXXXXXXXMELEIACYRKLLEGEESRVGLRSLVEQAIGVQGRGTASLKDTIQQSTASGSMTVQRSSKGPIAFNSVDQSGSNIVIENTTSGARAKTQSLKGWRVDKTVAGRVAASIELKNYDLPPNTKYTIWAKGAKDRATADNEQIADMFSLGVG.

Residue threonine 1 is modified to N-acetylthreonine. The interval 1–54 (TSKISTTYEEEGRQSKIQPRAFVITRSGPTSRSSSYSARQSYGSRSSITPGVYQ) is disordered. The head stretch occupies residues 1 to 74 (TSKISTTYEE…RGTREKEKRE (74 aa)). The segment covering 25–47 (TRSGPTSRSSSYSARQSYGSRSS) has biased composition (low complexity). Residues 71 to 423 (EKREMQNLNE…KLLEGEESRV (353 aa)) enclose the IF rod domain. Positions 75 to 106 (MQNLNERLAGYIEKVHFLDAQVKKLEAENXXX) are coil 1A. Residues 107–120 (XXXXXXXXXXXXXX) are linker 1. Residues 121–258 (XXXXXXXXXX…XXXXXXXXXX (138 aa)) are coil 1B. A linker 12 region spans residues 259-275 (XXXXXXXXMDYAEFWKS). A coil 2 region spans residues 276-423 (ELSKCVRDIQ…KLLEGEESRV (148 aa)). The tail stretch occupies residues 424–551 (GLRSLVEQAI…IADMFSLGVG (128 aa)). Residues 454 to 551 (GSMTVQRSSK…IADMFSLGVG (98 aa)) form the LTD domain.

It belongs to the intermediate filament family. Can form homomers.

The protein resides in the cytoplasm. Epithelial intermediate filament protein. This is Non-neuronal cytoplasmic intermediate filament protein A from Helix pomatia (Roman snail).